The following is a 437-amino-acid chain: uncharacterized protein (437 aa).

Over residues 63–87 the composition is skewed to polar residues; that stretch reads PSSANVSFQNSDDNLSTSRGRSASP. Disordered regions lie at residues 63 to 97, 112 to 147, and 346 to 437; these read PSSA…SNFP, VKKD…KKET, and PKNA…YSIW. Over residues 399–409 the composition is skewed to polar residues; it reads EALSPSKSNPD. The segment covering 425–437 has biased composition (low complexity); that stretch reads KKPSSSSSNYSIW.

This is an uncharacterized protein from Caenorhabditis elegans.